The primary structure comprises 342 residues: Gibberellin cluster GA4 desaturase (342 aa).

Residues 127–183 are disordered; sequence PELAPPYPMPGKSSSGSKEREAIPANELPTTRAKGFQKGEEEGPVRKPHKDWGPSGA.

It belongs to the asaB hydroxylase/desaturase family.

It functions in the pathway plant hormone biosynthesis; gibberellin biosynthesis. Its function is as follows. GA4 desaturase; part of the gene cluster that mediates the biosynthesis of gibberellins (GAs), diterpenoids that may provide a selective advantage during infection of the preferred host plant, rice. Gibberellins (GAs) are diterpenoids and are synthesized via the mevalonate pathway. Biosynthesis of the major metabolite GA3 (gibberellic acid) from geranylgeranyl diphosphate (GGPP) requires 13 steps. The GGPP produced by the geranylgeranyl diphosphate synthase GGS2 is converted to ent-kaurene via ent-copalyldiphosphate in a two-step cyclization reaction performed by the bifunctional ent-copalyl diphosphate synthase/ent-kaurene synthase enzyme (CPS/KS). Ent-Kaurene is metabolized to GAs by a series of oxidation reactions catalyzed by cytochrome P450 monooxygenases. Cytochrome P450 monooxygenase P450-4 is an ent-kaurene oxidase that catalyzes the three oxidation steps between ent-kaurene and ent-kaurenoic acid. The highly multifunctional cytochrome P450 monooxygenase P450-1 then catalyzes four steps involving oxidation at two carbon atoms, in the main pathway from ent-kaurenoic acid to GA14 via GA12-aldehyde as well as producing kaurenolides and fujenoic acids as by-products. The cytochrome P450 monooxygenase P450-2 then converts GA14 to GA4 by removal of C-20. GA4 is further converted to GA7 by the GA4 desaturase DES via 1,2-desaturation before cytochrome P450 monooxygenase P450-3, a 13-hydroxylase, hydroxylates GA7 to GA3, the final product of the GA-biosynthetic pathway. The protein is Gibberellin cluster GA4 desaturase of Gibberella fujikuroi (strain CBS 195.34 / IMI 58289 / NRRL A-6831) (Bakanae and foot rot disease fungus).